We begin with the raw amino-acid sequence, 184 residues long: UPF0149 protein PputW619_5026 (184 aa).

The protein belongs to the UPF0149 family.

The chain is UPF0149 protein PputW619_5026 from Pseudomonas putida (strain W619).